Consider the following 88-residue polypeptide: uncharacterized protein (88 aa).

The next 3 helical transmembrane spans lie at 3–23 (VFILFYLWIVPIVIGILCSVA), 33–53 (VAPGIAMIVLSIISLITAFTA), and 61–81 (FIGGMFLFGTFLVGSAFPFFF).

The protein resides in the cell membrane. This is an uncharacterized protein from Bacillus subtilis (strain 168).